Here is a 93-residue protein sequence, read N- to C-terminus: MFGLINIGFGNVIAGDRVIAIVNPESAPLKRLKEDAKEEGKLIDATYGRKTRSILITDSNHIILSAIQPETIAQRFIESMVEIEKQLEKIRKG.

Belongs to the RemA family.

This is Putative regulatory protein Fnod_1678 from Fervidobacterium nodosum (strain ATCC 35602 / DSM 5306 / Rt17-B1).